The primary structure comprises 591 residues: V-type ATP synthase alpha chain (591 aa).

Gly-242–Thr-249 contributes to the ATP binding site.

The protein belongs to the ATPase alpha/beta chains family.

The enzyme catalyses ATP + H2O + 4 H(+)(in) = ADP + phosphate + 5 H(+)(out). Produces ATP from ADP in the presence of a proton gradient across the membrane. The V-type alpha chain is a catalytic subunit. The polypeptide is V-type ATP synthase alpha chain (Chlamydia trachomatis serovar A (strain ATCC VR-571B / DSM 19440 / HAR-13)).